A 267-amino-acid chain; its full sequence is Tryptophan synthase alpha chain (267 aa).

Active-site proton acceptor residues include Glu49 and Asp60.

It belongs to the TrpA family. As to quaternary structure, tetramer of two alpha and two beta chains.

The catalysed reaction is (1S,2R)-1-C-(indol-3-yl)glycerol 3-phosphate + L-serine = D-glyceraldehyde 3-phosphate + L-tryptophan + H2O. The protein operates within amino-acid biosynthesis; L-tryptophan biosynthesis; L-tryptophan from chorismate: step 5/5. Functionally, the alpha subunit is responsible for the aldol cleavage of indoleglycerol phosphate to indole and glyceraldehyde 3-phosphate. This is Tryptophan synthase alpha chain from Salinispora tropica (strain ATCC BAA-916 / DSM 44818 / JCM 13857 / NBRC 105044 / CNB-440).